Here is a 429-residue protein sequence, read N- to C-terminus: MTAVAVVGSQWGDEGKGKITDFLSKDAAMAVRSNGGNNAGHTIDIDGKTFKMRLIPSGIFAAKDNTVIGNGVVINPEVMFSELENLEKNGIDTSGLRISNRAHIIMPYDIKQDEYQEEAKGKNKIGTTKNGIGPTYMDKASRIGIRVCDLLEKDTFEEKLRTNLEIKNELFTKVYGKPALKFEDIFDKYYEYGQRMKKYVTDTSVLVNDALDQNKKVLFEGAQGIMLDIDEGTYPFVTSSNTISGGIASGIGIGANRLDTVIGVCKAYTTRVGAGPFPTELLDETGDRIREIAHEYGTVTGRPRRVGWFDSVALRHSKRVAGINGLSLNLLDVFSGFDKIKICTAYELDGEKIDYYPASLKELYRCKPVYEELPAWEEDITQVKTWDELPENAKKFLNRISELVGVPLVTVSVGPDREQTIVLKNPWEM.

Residues G12–K18 and G40–T42 each bind GTP. D13 serves as the catalytic Proton acceptor. Positions 13 and 40 each coordinate Mg(2+). Residues D13–K16, N38–H41, T128, R142, Q223, T238, and R302 each bind IMP. H41 (proton donor) is an active-site residue. T298 to R304 provides a ligand contact to substrate. Residues R304, L330–D332, and S412–G414 contribute to the GTP site.

Belongs to the adenylosuccinate synthetase family. In terms of assembly, homodimer. The cofactor is Mg(2+).

The protein resides in the cytoplasm. It catalyses the reaction IMP + L-aspartate + GTP = N(6)-(1,2-dicarboxyethyl)-AMP + GDP + phosphate + 2 H(+). It functions in the pathway purine metabolism; AMP biosynthesis via de novo pathway; AMP from IMP: step 1/2. Functionally, plays an important role in the de novo pathway of purine nucleotide biosynthesis. Catalyzes the first committed step in the biosynthesis of AMP from IMP. The sequence is that of Adenylosuccinate synthetase from Lactobacillus acidophilus (strain ATCC 700396 / NCK56 / N2 / NCFM).